The sequence spans 423 residues: AP-1 complex subunit mu-2 (423 aa).

Residues 168-421 (KNEVFIDVIE…ITQSGDYQLR (254 aa)) enclose the MHD domain.

It belongs to the adaptor complexes medium subunit family. In terms of assembly, adaptor protein complex 1 (AP-1) is a heterotetramer composed of two large adaptins (gamma-type subunit AP1G1 and beta-type subunit AP1B1), a medium adaptin (mu-type subunit AP1M1 or AP1M2) and a small adaptin (sigma-type subunit AP1S1 or AP1S2 or AP1S3). Interacts with P2X4. Post-translationally, phosphorylation of membrane-bound AP1M1/AP1M2 increases its affinity for sorting signals.

Its subcellular location is the cytoplasmic vesicle. It is found in the clathrin-coated vesicle membrane. The protein resides in the golgi apparatus. In terms of biological role, subunit of clathrin-associated adaptor protein complex 1 that plays a role in protein sorting in the trans-Golgi network (TGN) and endosomes. The AP complexes mediate the recruitment of clathrin to membranes and the recognition of sorting signals within the cytosolic tails of transmembrane cargo molecules. The protein is AP-1 complex subunit mu-2 of Bos taurus (Bovine).